The sequence spans 77 residues: MNAKIVALLIVVGFVGMFNVATAADPLCSLEPAVGLCKASIPRFASVGGKCQEFIYGGCGGNANNFQTQAECEAKCG.

The first 23 residues, 1 to 23, serve as a signal peptide directing secretion; sequence MNAKIVALLIVVGFVGMFNVATA. A BPTI/Kunitz inhibitor domain is found at 28-76; it reads CSLEPAVGLCKASIPRFASVGGKCQEFIYGGCGGNANNFQTQAECEAKC. Intrachain disulfides connect Cys28-Cys76, Cys37-Cys59, and Cys51-Cys72.

Belongs to the venom Kunitz-type family. Expressed by the venom gland.

The protein localises to the secreted. Functionally, serine protease inhibitor. In Pimpla hypochondriaca (Parasitoid wasp), this protein is Kunitz-type serine protease inhibitor cvp2.